The primary structure comprises 511 residues: UPF0288 protein MK0796 (511 aa).

Belongs to the UPF0288 family.

This is UPF0288 protein MK0796 from Methanopyrus kandleri (strain AV19 / DSM 6324 / JCM 9639 / NBRC 100938).